Here is a 256-residue protein sequence, read N- to C-terminus: Probable enoyl-CoA hydratase echA14 (256 aa).

The tract at residues 235-256 is disordered; the sequence is GPQAKSVQSPEFAARLAAAQHR.

Belongs to the enoyl-CoA hydratase/isomerase family.

It carries out the reaction a (3S)-3-hydroxyacyl-CoA = a (2E)-enoyl-CoA + H2O. The enzyme catalyses a 4-saturated-(3S)-3-hydroxyacyl-CoA = a (3E)-enoyl-CoA + H2O. Its function is as follows. Could possibly oxidize fatty acids using specific components. The chain is Probable enoyl-CoA hydratase echA14 (echA14) from Mycobacterium tuberculosis (strain CDC 1551 / Oshkosh).